The primary structure comprises 1359 residues: Tripeptidyl-peptidase 2 (1359 aa).

The segment at A45–A81 is disordered. Over residues A64 to A81 the composition is skewed to low complexity. Residues E102–F600 form the Peptidase S8 domain. Catalysis depends on charge relay system residues D126, H353, and S539.

This sequence belongs to the peptidase S8 family.

The catalysed reaction is Release of an N-terminal tripeptide from a polypeptide.. In terms of biological role, serine protease that may function in the proteasome pathway. The chain is Tripeptidyl-peptidase 2 (TPP2) from Oryza sativa subsp. japonica (Rice).